The sequence spans 70 residues: Putative microRNA 17 host gene protein (70 aa).

The Cytoplasmic portion of the chain corresponds to 1-20; it reads MFCHVDVKISSKRYTWTKLP. Residues 21–43 traverse the membrane as a helical segment; the sequence is LNVPKLVLIYLQSHFVLFFFSMC. The Extracellular portion of the chain corresponds to 44-70; the sequence is QSIWERPAIGRATTSSASWMVGYDCLL.

Highly expressed in B-cell lymphoma and lung cancer.

It is found in the membrane. In Homo sapiens (Human), this protein is Putative microRNA 17 host gene protein (MIR17HG).